Here is a 533-residue protein sequence, read N- to C-terminus: 2-succinyl-5-enolpyruvyl-6-hydroxy-3-cyclohexene-1-carboxylate synthase (533 aa).

This sequence belongs to the TPP enzyme family. MenD subfamily. As to quaternary structure, homodimer. It depends on Mg(2+) as a cofactor. Mn(2+) serves as cofactor. Thiamine diphosphate is required as a cofactor.

It catalyses the reaction isochorismate + 2-oxoglutarate + H(+) = 5-enolpyruvoyl-6-hydroxy-2-succinyl-cyclohex-3-ene-1-carboxylate + CO2. The protein operates within quinol/quinone metabolism; 1,4-dihydroxy-2-naphthoate biosynthesis; 1,4-dihydroxy-2-naphthoate from chorismate: step 2/7. Its pathway is quinol/quinone metabolism; menaquinone biosynthesis. Functionally, catalyzes the thiamine diphosphate-dependent decarboxylation of 2-oxoglutarate and the subsequent addition of the resulting succinic semialdehyde-thiamine pyrophosphate anion to isochorismate to yield 2-succinyl-5-enolpyruvyl-6-hydroxy-3-cyclohexene-1-carboxylate (SEPHCHC). This is 2-succinyl-5-enolpyruvyl-6-hydroxy-3-cyclohexene-1-carboxylate synthase from Akkermansia muciniphila (strain ATCC BAA-835 / DSM 22959 / JCM 33894 / BCRC 81048 / CCUG 64013 / CIP 107961 / Muc).